The sequence spans 331 residues: UPF0329 protein ECU01_0080/ECU01_1530/ECU02_1560/ECU04_0090/ECU08_0010/ECU08_2090 (331 aa).

Residues 305-320 show a composition bias toward basic and acidic residues; that stretch reads QRSEMEKRDREQDPER. The tract at residues 305 to 331 is disordered; the sequence is QRSEMEKRDREQDPERRRLRARRVGSL. The span at 321–331 shows a compositional bias: basic residues; it reads RRLRARRVGSL.

This sequence belongs to the UPF0329 family.

The chain is UPF0329 protein ECU01_0080/ECU01_1530/ECU02_1560/ECU04_0090/ECU08_0010/ECU08_2090 from Encephalitozoon cuniculi (strain GB-M1) (Microsporidian parasite).